We begin with the raw amino-acid sequence, 166 residues long: Signal peptidase complex catalytic subunit SEC11 (166 aa).

Residues 1–9 (MNIRQQITQ) are Cytoplasmic-facing. Residues 10 to 30 (FLSLAYVFSSAFMLWKTLSVI) traverse the membrane as a helical; Signal-anchor for type II membrane protein segment. The Lumenal segment spans residues 31-166 (ANSHSPIVVV…LGLSSLFSNE (136 aa)). Residues Ser44, His83, and Asp108 each act as charge relay system in the active site. Residues 152–163 (GMLGLLGLSSLF) are C-terminal short (CTS) helix.

This sequence belongs to the peptidase S26B family. Component of the signal peptidase complex (SPC) composed of a catalytic subunit SEC11 and three accessory subunits SPC1, SPC2 and SPC3. The complex induces a local thinning of the ER membrane which is used to measure the length of the signal peptide (SP) h-region of protein substrates. This ensures the selectivity of the complex towards h-regions shorter than 18-20 amino acids. SPC associates with the translocon complex.

It is found in the endoplasmic reticulum membrane. The enzyme catalyses Cleavage of hydrophobic, N-terminal signal or leader sequences from secreted and periplasmic proteins.. Its function is as follows. Catalytic component of the signal peptidase complex (SPC) which catalyzes the cleavage of N-terminal signal sequences from nascent proteins as they are translocated into the lumen of the endoplasmic reticulum. Specifically cleaves N-terminal signal peptides that contain a hydrophobic alpha-helix (h-region) shorter than 18-20 amino acids. The polypeptide is Signal peptidase complex catalytic subunit SEC11 (SEC11) (Candida albicans (strain SC5314 / ATCC MYA-2876) (Yeast)).